Here is a 764-residue protein sequence, read N- to C-terminus: Putative alpha-1,3-mannosyltransferase MNN13 (764 aa).

The Cytoplasmic portion of the chain corresponds to 1–13 (MIKPILGTKKIRR). A helical membrane pass occupies residues 14 to 34 (VICIIIGLFCILLLIGIFKHN). Topologically, residues 35 to 764 (STNSVNNEAS…YLGDVWVGKY (730 aa)) are lumenal. Residues Asn45 and Asn204 are each glycosylated (N-linked (GlcNAc...) asparagine).

Belongs to the MNN1/MNT family.

The protein localises to the golgi apparatus membrane. The protein operates within protein modification; protein glycosylation. Responsible for addition of the terminal mannose residues to the outer chain of core N-linked polysaccharides and to O-linked mannotriose. Implicated in late Golgi modifications. The polypeptide is Putative alpha-1,3-mannosyltransferase MNN13 (MNN13) (Candida albicans (strain SC5314 / ATCC MYA-2876) (Yeast)).